The following is a 365-amino-acid chain: 2-aminoethylphosphonate--pyruvate transaminase (365 aa).

Lys-194 is modified (N6-(pyridoxal phosphate)lysine).

This sequence belongs to the class-V pyridoxal-phosphate-dependent aminotransferase family. PhnW subfamily. In terms of assembly, homodimer. Pyridoxal 5'-phosphate is required as a cofactor.

It catalyses the reaction (2-aminoethyl)phosphonate + pyruvate = phosphonoacetaldehyde + L-alanine. Functionally, involved in phosphonate degradation. In Bacillus mycoides (strain KBAB4) (Bacillus weihenstephanensis), this protein is 2-aminoethylphosphonate--pyruvate transaminase.